Consider the following 154-residue polypeptide: Large ribosomal subunit protein uL13 (154 aa).

The protein belongs to the universal ribosomal protein uL13 family. In terms of assembly, part of the 50S ribosomal subunit.

This protein is one of the early assembly proteins of the 50S ribosomal subunit, although it is not seen to bind rRNA by itself. It is important during the early stages of 50S assembly. This chain is Large ribosomal subunit protein uL13, found in Rhizobium johnstonii (strain DSM 114642 / LMG 32736 / 3841) (Rhizobium leguminosarum bv. viciae).